The sequence spans 212 residues: Protein-L-isoaspartate O-methyltransferase (212 aa).

The active site involves serine 60.

It belongs to the methyltransferase superfamily. L-isoaspartyl/D-aspartyl protein methyltransferase family.

The protein resides in the cytoplasm. The catalysed reaction is [protein]-L-isoaspartate + S-adenosyl-L-methionine = [protein]-L-isoaspartate alpha-methyl ester + S-adenosyl-L-homocysteine. Its function is as follows. Catalyzes the methyl esterification of L-isoaspartyl residues in peptides and proteins that result from spontaneous decomposition of normal L-aspartyl and L-asparaginyl residues. It plays a role in the repair and/or degradation of damaged proteins. The polypeptide is Protein-L-isoaspartate O-methyltransferase (Methanococcus maripaludis (strain C5 / ATCC BAA-1333)).